Reading from the N-terminus, the 362-residue chain is Chorismate synthase (362 aa).

Arg47 lines the NADP(+) pocket. FMN contacts are provided by residues 124 to 126 (RSS), Gly286, 301 to 305 (KPTAT), and Arg327.

It belongs to the chorismate synthase family. As to quaternary structure, homotetramer. FMNH2 serves as cofactor.

It catalyses the reaction 5-O-(1-carboxyvinyl)-3-phosphoshikimate = chorismate + phosphate. Its pathway is metabolic intermediate biosynthesis; chorismate biosynthesis; chorismate from D-erythrose 4-phosphate and phosphoenolpyruvate: step 7/7. Its function is as follows. Catalyzes the anti-1,4-elimination of the C-3 phosphate and the C-6 proR hydrogen from 5-enolpyruvylshikimate-3-phosphate (EPSP) to yield chorismate, which is the branch point compound that serves as the starting substrate for the three terminal pathways of aromatic amino acid biosynthesis. This reaction introduces a second double bond into the aromatic ring system. This is Chorismate synthase from Synechococcus elongatus (strain ATCC 33912 / PCC 7942 / FACHB-805) (Anacystis nidulans R2).